The sequence spans 41 residues: Large ribosomal subunit protein bL36 (41 aa).

The protein belongs to the bacterial ribosomal protein bL36 family.

The polypeptide is Large ribosomal subunit protein bL36 (Sinorhizobium fredii (strain NBRC 101917 / NGR234)).